Here is a 198-residue protein sequence, read N- to C-terminus: Ribonuclease HII (198 aa).

One can recognise an RNase H type-2 domain in the interval 3–194; the sequence is RRVCGVDEAG…VKRCLALGQQ (192 aa). Positions 9, 10, and 101 each coordinate a divalent metal cation.

This sequence belongs to the RNase HII family. Mn(2+) is required as a cofactor. Mg(2+) serves as cofactor.

The protein localises to the cytoplasm. It catalyses the reaction Endonucleolytic cleavage to 5'-phosphomonoester.. Functionally, endonuclease that specifically degrades the RNA of RNA-DNA hybrids. This chain is Ribonuclease HII, found in Laribacter hongkongensis (strain HLHK9).